The primary structure comprises 135 residues: Small ribosomal subunit protein uS8 (135 aa).

Belongs to the universal ribosomal protein uS8 family. As to quaternary structure, part of the 30S ribosomal subunit. Contacts proteins S5 and S12.

One of the primary rRNA binding proteins, it binds directly to 16S rRNA central domain where it helps coordinate assembly of the platform of the 30S subunit. The polypeptide is Small ribosomal subunit protein uS8 (Salinispora arenicola (strain CNS-205)).